The sequence spans 366 residues: MSEVILQLQKRLGETQLDVDLRLPAVGICAIFGRSGAGKTSLINLISGLTTPDVGEIHLAGRTLFSSSQGIQLPIEQRKIGYVFQDARLFPHYTVRGNLNYGVTDADPEYFASVTRLLALEPLLVRYPRDLSGGEKQRVAIGRALLSKPDLLLMDEPLASLDMPRKKEVMPFLENLAQHFRLPILYVSHSMQEILRLADHLVVLEQGKVLSAGPIEQVWSSKAMRPWQSFSEQSTLFSATVAKHHQTYGLTQVRLAEDVWLWVQQVEADVGSSVRMQVRANDVSIALDKPTASSIRNILPARIVAIEHQQPSKKSVSLKLELAPHCYLWAVVTEWAHAELALEVGMPVFAQIKGVSVAQRDVILTN.

The ABC transporter domain occupies Met-1–Ser-231. Gly-33–Thr-40 serves as a coordination point for ATP. Positions Ala-292 to Asp-361 constitute a Mop domain.

It belongs to the ABC transporter superfamily. Molybdate importer (TC 3.A.1.8) family. The complex is composed of two ATP-binding proteins (ModC), two transmembrane proteins (ModB) and a solute-binding protein (ModA).

Its subcellular location is the cell inner membrane. It carries out the reaction molybdate(out) + ATP + H2O = molybdate(in) + ADP + phosphate + H(+). Its function is as follows. Part of the ABC transporter complex ModABC involved in molybdenum import. Responsible for energy coupling to the transport system. The protein is Molybdenum import ATP-binding protein ModC of Vibrio cholerae serotype O1 (strain ATCC 39315 / El Tor Inaba N16961).